A 192-amino-acid chain; its full sequence is Fe/S biogenesis protein NfuA (192 aa).

Cys-149 and Cys-152 together coordinate [4Fe-4S] cluster.

This sequence belongs to the NfuA family. Homodimer. It depends on [4Fe-4S] cluster as a cofactor.

Its function is as follows. Involved in iron-sulfur cluster biogenesis. Binds a 4Fe-4S cluster, can transfer this cluster to apoproteins, and thereby intervenes in the maturation of Fe/S proteins. Could also act as a scaffold/chaperone for damaged Fe/S proteins. The sequence is that of Fe/S biogenesis protein NfuA from Alteromonas mediterranea (strain DSM 17117 / CIP 110805 / LMG 28347 / Deep ecotype).